The primary structure comprises 189 residues: Large ribosomal subunit protein bL9 (189 aa).

It belongs to the bacterial ribosomal protein bL9 family.

Its function is as follows. Binds to the 23S rRNA. The protein is Large ribosomal subunit protein bL9 of Cereibacter sphaeroides (strain ATCC 17025 / ATH 2.4.3) (Rhodobacter sphaeroides).